Reading from the N-terminus, the 286-residue chain is 2-hydroxy-6-oxo-6-phenylhexa-2,4-dienoate hydrolase (286 aa).

An AB hydrolase-1 domain is found at 36–271 (VIMLHGGGPG…RCGHWAQWEH (236 aa)). Substrate-binding positions include 42 to 43 (GG), asparagine 51, asparagine 111, serine 180, and arginine 190. Histidine 265 acts as the Proton acceptor in catalysis. Position 266 (tryptophan 266) interacts with substrate.

This sequence belongs to the AB hydrolase superfamily. BphD family. In terms of assembly, homodimer.

The catalysed reaction is 2,6-dioxo-6-phenylhexa-3-enoate + H2O = 2-oxopent-4-enoate + benzoate + H(+). It functions in the pathway xenobiotic degradation; biphenyl degradation; 2-hydroxy-2,4-pentadienoate and benzoate from biphenyl: step 4/4. In terms of biological role, catalyzes an unusual C-C bond hydrolysis of 2-hydroxy-6-oxo-6-phenylhexa-2,4-dienoic acid (HOPDA) to produce benzoic acid and 2-hydroxy-2,4-pentadienoic acid (HPD). This chain is 2-hydroxy-6-oxo-6-phenylhexa-2,4-dienoate hydrolase, found in Burkholderia cepacia (Pseudomonas cepacia).